A 311-amino-acid polypeptide reads, in one-letter code: MTGVSDIQEAVAQIKAAGPSKPRLARDPVNQPMINNWVEAIGDRNPIYVDDAAARAAGHPGIVAPPAMIQVWTMMGLGGVRPKDDPLGPIIKLFDDAGYIGVVATNCEQTYHRYLLPGEQVSISAELGDVVGPKQTALGEGWFINQHIVWQVGDEDVAEMNWRILKFKPAGSPSSVPDDLDPDAMMRPSSSRDTAFFWDGVKAHELRIQRLADGSLRHPPVPAVWQDKSVPINYVVSSGRGTVFSFVVHHAPKVPGRTVPFVIALVELEEGVRMLGELRGADPARVAIGMPVRATYIDFPDWSLYAWEPDE.

Positions 198 to 295 (WDGVKAHELR…VAIGMPVRAT (98 aa)) are DUF35.

Belongs to the thioester dehydratase family. Heterodimer composed of ChsH1 and ChsH2. Two heterodimers combine to form a heterotetramer. The complex interacts with Ltp2 via the DUF35 C-terminal region of ChsH2. The ChsH1-ChsH2-Ltp2 protein complex is composed of two protomers that form a heterohexameric structure through the Ltp2 dimerization interface.

The enzyme catalyses 3-oxochola-4,17-dien-22-oyl-CoA + H2O = 17-hydroxy-3-oxochol-4-en-22-oyl-CoA. It catalyses the reaction (2E)-octenoyl-CoA + H2O = 3-hydroxyoctanoyl-CoA. It carries out the reaction (2E)-decenoyl-CoA + H2O = 3-hydroxydecanoyl-CoA. It functions in the pathway steroid metabolism; cholesterol degradation. In the absence of the Ltp2 aldolase, ChsH1/ChsH2 can hydrate only about 30% of the 3-OPDC-CoA substrate. Complete turnover requires the presence of Ltp2. In terms of biological role, involved in cholesterol side chain degradation. Catalyzes the hydration of 3-oxo-4,17-pregnadiene-20-carboxyl-CoA (3-OPDC-CoA) to form 17-hydroxy-3-oxo-4-pregnene-20-carboxyl-CoA (17-HOPC-CoA), in the modified beta-oxidation pathway for cholesterol side chain degradation. Can also use octenoyl-CoA and decenoyl-CoA, with lower efficiency. This is 3-oxo-4,17-pregnadiene-20-carboxyl-CoA hydratase alpha subunit from Mycobacterium tuberculosis (strain ATCC 25618 / H37Rv).